A 948-amino-acid polypeptide reads, in one-letter code: MSFNKLESYSNKEVIREEVAILTDLLADITRNLLSPETFEKISLMEDLAVNSKYHELKAIVEELTTDEMVYISRYFSILPLLINISEDVDLAYEINHQNNINQDYLGKLSTTIDLISTRENAQEILENLNVVPVLTAHPTQVQRKTILDLTNHIHSLLRQHRDVKAGLVNEKKWLGNLRRYIELMMQTDMIREKKLKVTNEITNVMEYYNSSFLQAITNFMVEYRRLAEERGIKLDNPKPITMGMWIGGDRDGNPFVTAETLKLSATLQSEVILNYYIDKVYTLYRTFSLSTNLSETSQAVAEMAALSTDKSVYRENEPYRRAFHYIQSKLIQTLLYLKEGNFSNDGQRLTDRAEEKLSAKANLSVSNKGREIIPNYIQSRISETLTELKKEETPSYKTAQEFKEDLQVIYDSLIEHHGEALVSGDLTELLQAVDVFGFFLASIDMRQDSSVHEACVAELLASANIVQDYSSLSEEEKCQVLLKQLLEDPRILSATHEPKSELLQKELEIFKTARQLKDAIGEEVIKQNIISHSTSVSDLLELAIMLKEVGLIDENGARVQIVPLFETIEDLDNSCNTMEKYLSLPIAQKWIASKDNYQEIMLGYSDSNKDGGYLSSCWTLYKAQQQLTAIGDKFGVKITFFHGRGGTVGRGGGPTYEAITSQPLRSINDRIRLTEQGEVIGNKYGNKDAAYYNLEMLVSAAINRMVTHKKSDSHTSDKYERIMDQVVNRSYQIYRDLVFGDERFYDYFFESSPIKAISSFNIGSRPAARKTITEIGGLRAIPWVFSWSQSRVMFPGWYGVGSSFKEFIDEDPENNLAFLQFMYKRWPFFKSLLSNVDMVLSKSNMNIAFEYAQLCEDQNVRDIFNIILDEWQLTKDVILEIEGHDELLAENTYLRDSLHYRMPYFNVLNYIQLELIKRQRNGQLTPDQEKLIHITINGIATGLRNSG.

Residues histidine 138 and lysine 610 contribute to the active site.

It belongs to the PEPCase type 1 family. Mg(2+) serves as cofactor.

The enzyme catalyses oxaloacetate + phosphate = phosphoenolpyruvate + hydrogencarbonate. Its function is as follows. Forms oxaloacetate, a four-carbon dicarboxylic acid source for the tricarboxylic acid cycle. The polypeptide is Phosphoenolpyruvate carboxylase (Streptococcus sanguinis (strain SK36)).